A 942-amino-acid chain; its full sequence is MVKAYLKFVQDKVFGLISTSNSILDGSGKLAITGCGERISIWDLRKQVLNQSLYEEDIKAEVTNVCLSKDGALLASGYSDGSIRIWSMSDYQLQAVFNGHRGSVTTMTFNRLGNILVSGSKDTEVIVWDIITESGLFRLRGHRDQITSVKLLERSNHLITSSKDGFIKIWDTETQHCIQTIVGHRNPIWGIDVNPDETRLCSCTSDNQIRFWRIPSNERQREDGSGIEPKFIVNTPINSAVIIPDEINEDGSKKENSNNSNNNDIDDLEIISEEEFAKYYGSITVKAESVSGVRFDPTNKILAVQSTGKFVDLFKITHYDTMKLEEISIVEEMRHRQTIKTSSKVRFFSFGNDIKHWNKFVITLAGNSLEAYEIKEKEQGGGAFEVSSTLDQAGHRSDIRSLSLSSNDQMLVSTSSESVKVWNMKSLSCIRSIACDYGLCTVFAPGNLHVIVGTKTGTIEVFELASAARVASIKAHEGSVWSLVLTPDLRGVTSGGADKLVKFWDFELIASQENSKHKVLNLSLTKTLKVESDVLALKYSADNKFLAVSLLDNTVKIFYTDTVKFHLSLYGHKLPVMCLDISDDSTLIITGSADKNIKIWGLDYGDCHKSFFAHDDSIMQVSFIPSTHHFISASKDKRIKYWDADKFEHIQTIEAHHGEVWSLAMGSVGDFFISGSHDRSIRIFNQTETPIFVESDRQREMEQTWEATLEDDTRMRTKEMLEENAAAGKQTLETIMAGEDILDAIELCVQEKFKIDEYEKLLKTTKNQDEIPLYQPNIIMLGLSPSEYLWNRINRIRPSDLEEALRVLPFSVMRTLFEYFNLWVDQSGKSVEFIFKCSFFLIQTHQNQLSVSTEFIPILQHLNTSIKNRLQKERFTLGFNRSALSFVKREIEINQQYKFFDSDLYLNKNNKNNKDKDSNNNKKDNKKDNKKDNEKSLKRNRK.

WD repeat units follow at residues 9-52 (VQDK…LNQS), 57-96 (DIKAEVTNVCLSKDGALLASGYSDGSIRIWSMSDYQLQAV), 99-138 (GHRGSVTTMTFNRLGNILVSGSKDTEVIVWDIITESGLFR), 141-180 (GHRDQITSVKLLERSNHLITSSKDGFIKIWDTETQHCIQT), 183-222 (GHRNPIWGIDVNPDETRLCSCTSDNQIRFWRIPSNERQRE), 285-324 (VKAESVSGVRFDPTNKILAVQSTGKFVDLFKITHYDTMKL), 394-432 (GHRSDIRSLSLSSNDQMLVSTSSESVKVWNMKSLSCIRS), 434-472 (ACDYGLCTVFAPGNLHVIVGTKTGTIEVFELASAARVAS), 475-514 (AHEGSVWSLVLTPDLRGVTSGGADKLVKFWDFELIASQEN), 529-568 (KVESDVLALKYSADNKFLAVSLLDNTVKIFYTDTVKFHLS), 571-612 (GHKL…KSFF), 613-652 (AHDDSIMQVSFIPSTHHFISASKDKRIKYWDADKFEHIQT), and 655-694 (AHHGEVWSLAMGSVGDFFISGSHDRSIRIFNQTETPIFVE). A disordered region spans residues 909-942 (NNKNNKDKDSNNNKKDNKKDNKKDNEKSLKRNRK). The segment covering 912–942 (NNKDKDSNNNKKDNKKDNKKDNEKSLKRNRK) has biased composition (basic and acidic residues).

The protein belongs to the WD repeat WDR3/UTP12 family.

It localises to the nucleus. The protein resides in the nucleolus. This Dictyostelium discoideum (Social amoeba) protein is WD repeat-containing protein 3 homolog (wdr3).